The primary structure comprises 295 residues: Small ribosomal subunit protein uS3 (295 aa).

The region spanning 39–107 (VREYLKKKLK…PVAVNIEEVR (69 aa)) is the KH type-2 domain. Residues 213-295 (GTGAKMIEVA…AAAADGAKTE (83 aa)) form a disordered region. Residues 224–245 (EERKPRGPRRDARPGDRPDRGA) show a composition bias toward basic and acidic residues. Composition is skewed to low complexity over residues 246–255 (PRGAPRAPRG) and 283–295 (AAPA…AKTE).

This sequence belongs to the universal ribosomal protein uS3 family. In terms of assembly, part of the 30S ribosomal subunit. Forms a tight complex with proteins S10 and S14.

In terms of biological role, binds the lower part of the 30S subunit head. Binds mRNA in the 70S ribosome, positioning it for translation. This chain is Small ribosomal subunit protein uS3, found in Polaromonas naphthalenivorans (strain CJ2).